A 331-amino-acid polypeptide reads, in one-letter code: NADH-quinone oxidoreductase subunit H (331 aa).

The next 9 helical transmembrane spans lie at 5–25 (LFFVITTIVKAVVILAVMASL), 45–65 (GPDMVGPAGVLQIVADMIKLF), 78–98 (FIFLIAPLISAIAAFAALAPV), 122–142 (VLYIAGVAAVCVFSPLAAGLA), 156–176 (VVALLSFEVVAGMALLSVVMV), 192–212 (IFNWLIFKQPLAFVLFVMASF), 245–265 (FFIGEYTNMIAASIIITLLFL), 271–291 (FLFIPGALMIILKSSLVFFFF), and 311–331 (WKILLPLGILNVVITGFALLI).

Belongs to the complex I subunit 1 family. As to quaternary structure, NDH-1 is composed of 14 different subunits. Subunits NuoA, H, J, K, L, M, N constitute the membrane sector of the complex.

Its subcellular location is the cell inner membrane. It carries out the reaction a quinone + NADH + 5 H(+)(in) = a quinol + NAD(+) + 4 H(+)(out). Functionally, NDH-1 shuttles electrons from NADH, via FMN and iron-sulfur (Fe-S) centers, to quinones in the respiratory chain. The immediate electron acceptor for the enzyme in this species is believed to be ubiquinone. Couples the redox reaction to proton translocation (for every two electrons transferred, four hydrogen ions are translocated across the cytoplasmic membrane), and thus conserves the redox energy in a proton gradient. This subunit may bind ubiquinone. This Campylobacter concisus (strain 13826) protein is NADH-quinone oxidoreductase subunit H.